A 179-amino-acid chain; its full sequence is Large ribosomal subunit protein uL6 (179 aa).

The protein belongs to the universal ribosomal protein uL6 family. Part of the 50S ribosomal subunit.

Its function is as follows. This protein binds to the 23S rRNA, and is important in its secondary structure. It is located near the subunit interface in the base of the L7/L12 stalk, and near the tRNA binding site of the peptidyltransferase center. This is Large ribosomal subunit protein uL6 from Streptomyces griseus subsp. griseus (strain JCM 4626 / CBS 651.72 / NBRC 13350 / KCC S-0626 / ISP 5235).